Here is a 270-residue protein sequence, read N- to C-terminus: Mevalonyl-coenzyme A hydratase sidH (270 aa).

Positions 268–270 (SKL) match the PTS1-type peroxisomal targeting signal motif.

It belongs to the enoyl-CoA hydratase/isomerase family.

The protein localises to the peroxisome. The protein operates within siderophore biosynthesis. In terms of biological role, mevalonyl-coenzyme A hydratase; part of the siderophore biosynthetic pathway. Aspergillus fumigatus produces 4 types of siderophores, low-molecular-mass iron chelators, including excreted fusarinine C (FsC) and triacetylfusarinine C (TAFC) for iron uptake and intacellular ferricrocin (FC) for hyphal and hydroxyferricrocin (HFC) for conidial iron distribution and storage. TAFC consists of 3 N(2)-acetyl-N(5)-anhydromevalonyl-N(5)-hydroxyornithine residues cyclically linked by ester bonds; FC is a cyclic hexapeptide with the structure Gly-Ser-Gly-(N(5)-acetyl-N(5)-hydroxyornithine)x3. The biosynthesis of all four siderophores depends on the hydroxylation of ornithine, catalyzed by the monooxygenase sidA. Subsequently, the pathways for biosynthesis of extra- and intracellular siderophores split. For biosynthesis of extracellular siderophores, the transacylase sidF transfers anhydromevalonyl to N(5)-hydroxyornithine. The required anhydromevalonyl-CoA moiety is derived from mevalonate by CoA ligation and dehydration catalyzed by sidI and sidH respectively. The acetylation of N(5)-hydroxyornithine for FC biosynthesis involves the constitutively expressed sidL. FC is hydroxylated to HFC by an as yet uncharacterized enzyme during conidiation. Assembly of fusarinine C (FsC) and FC is catalyzed by two different nonribosomal peptide synthetases (NRPS), sidD and sidC respectively. Subsequently, sidG catalyzes N2-acetylation of FsC for forming TAFC. Both extra- and intracellular siderophores are crucial for growth during iron limitation and virulence. The protein is Mevalonyl-coenzyme A hydratase sidH of Aspergillus fumigatus (strain ATCC MYA-4609 / CBS 101355 / FGSC A1100 / Af293) (Neosartorya fumigata).